We begin with the raw amino-acid sequence, 398 residues long: 1-deoxy-D-xylulose 5-phosphate reductoisomerase (398 aa).

Positions 10, 11, 12, 13, 36, 38, and 124 each coordinate NADPH. Lys-125 is a binding site for 1-deoxy-D-xylulose 5-phosphate. Glu-126 contributes to the NADPH binding site. Asp-150 contacts Mn(2+). Ser-151, Glu-152, Ser-176, and His-199 together coordinate 1-deoxy-D-xylulose 5-phosphate. Glu-152 contacts Mn(2+). Residue Gly-205 participates in NADPH binding. Residues Ser-212, Asn-217, Lys-218, and Glu-221 each coordinate 1-deoxy-D-xylulose 5-phosphate. A Mn(2+)-binding site is contributed by Glu-221.

This sequence belongs to the DXR family. Requires Mg(2+) as cofactor. Mn(2+) serves as cofactor.

It catalyses the reaction 2-C-methyl-D-erythritol 4-phosphate + NADP(+) = 1-deoxy-D-xylulose 5-phosphate + NADPH + H(+). It participates in isoprenoid biosynthesis; isopentenyl diphosphate biosynthesis via DXP pathway; isopentenyl diphosphate from 1-deoxy-D-xylulose 5-phosphate: step 1/6. In terms of biological role, catalyzes the NADPH-dependent rearrangement and reduction of 1-deoxy-D-xylulose-5-phosphate (DXP) to 2-C-methyl-D-erythritol 4-phosphate (MEP). The sequence is that of 1-deoxy-D-xylulose 5-phosphate reductoisomerase from Nostoc punctiforme (strain ATCC 29133 / PCC 73102).